We begin with the raw amino-acid sequence, 79 residues long: Dolichyl-diphosphooligosaccharide--protein glycosyltransferase subunit TMEM258 (79 aa).

The residue at position 1 (Met1) is an N-acetylmethionine. 2 helical membrane passes run 17-37 (VFPH…AWFF) and 59-79 (VASL…GIYI).

It belongs to the OST5 family. As to quaternary structure, component of the oligosaccharyltransferase (OST) complex. OST exists in two different complex forms which contain common core subunits RPN1, RPN2, OST48, OST4, DAD1 and TMEM258, either STT3A or STT3B as catalytic subunits, and form-specific accessory subunits. STT3A complex assembly occurs through the formation of 3 subcomplexes. Subcomplex 1 contains RPN1 and TMEM258, subcomplex 2 contains the STT3A-specific subunits STT3A, DC2/OSTC, and KCP2 as well as the core subunit OST4, and subcomplex 3 contains RPN2, DAD1, and OST48. The STT3A complex can form stable complexes with the Sec61 complex or with both the Sec61 and TRAP complexes.

Its subcellular location is the membrane. It is found in the endoplasmic reticulum. The protein localises to the cytoplasm. The protein operates within protein modification; protein glycosylation. In terms of biological role, subunit of the oligosaccharyl transferase (OST) complex that catalyzes the initial transfer of a defined glycan (Glc(3)Man(9)GlcNAc(2) in eukaryotes) from the lipid carrier dolichol-pyrophosphate to an asparagine residue within an Asn-X-Ser/Thr consensus motif in nascent polypeptide chains, the first step in protein N-glycosylation. N-glycosylation occurs cotranslationally and the complex associates with the Sec61 complex at the channel-forming translocon complex that mediates protein translocation across the endoplasmic reticulum (ER). All subunits are required for a maximal enzyme activity. Involved in ER homeostasis in the colonic epithelium. The protein is Dolichyl-diphosphooligosaccharide--protein glycosyltransferase subunit TMEM258 of Bos taurus (Bovine).